The chain runs to 438 residues: Exosome complex component RRP45 (438 aa).

Ser-65 bears the Phosphoserine mark. Lys-297 is subject to N6-acetyllysine; alternate. Lys-297 participates in a covalent cross-link: Glycyl lysine isopeptide (Lys-Gly) (interchain with G-Cter in SUMO1); alternate. Lys-297 is covalently cross-linked (Glycyl lysine isopeptide (Lys-Gly) (interchain with G-Cter in SUMO2); alternate). Phosphoserine is present on residues Ser-306 and Ser-346. 2 disordered regions span residues 337-365 (AQIGDGIENSWGDLEDSEKEEEEEEGGID) and 377-438 (TGEV…RTAN). A compositionally biased stretch (acidic residues) spans 349 to 364 (DLEDSEKEEEEEEGGI). 2 positions are modified to phosphoserine: Ser-393 and Ser-395. The span at 427-438 (QGKRKKKKRTAN) shows a compositional bias: basic residues.

This sequence belongs to the RNase PH family. In terms of assembly, component of the RNA exosome core complex (Exo-9), composed of EXOSC1, EXOSC2, EXOSC3, EXOSC4, EXOSC5, EXOSC6, EXOSC7, EXOSC8 and EXOSC9; within the complex interacts with EXOSC3, EXOSC4, EXOSC5 and DIS3. The catalytically inactive RNA exosome core complex (Exo-9) associates with the catalytic subunit EXOSC10/RRP6. Exo-9 may associate with DIS3 to form the nucleolar exosome complex, or DIS3L to form the cytoplasmic exosome complex. Exo-9 is formed by a hexameric base ring consisting of the heterodimers EXOSC4-EXOSC9, EXOSC5-EXOSC8 and EXOSC6-EXOSC7, and a cap ring consisting of EXOSC1, EXOSC2 and EXOSC3. The RNA exosome complex associates with cofactors C1D/RRP47, MPHOSPH6/MPP6 and MTREX/MTR4. Interacts (via C-terminus region) with SETX (via N-terminus domain); the interaction enhances SETX sumoylation. Interacts with DIS3; the interaction is direct.

The protein localises to the cytoplasm. Its subcellular location is the nucleus. It is found in the nucleolus. It localises to the nucleoplasm. Its function is as follows. Non-catalytic component of the RNA exosome complex which has 3'-&gt;5' exoribonuclease activity and participates in a multitude of cellular RNA processing and degradation events. In the nucleus, the RNA exosome complex is involved in proper maturation of stable RNA species such as rRNA, snRNA and snoRNA, in the elimination of RNA processing by-products and non-coding 'pervasive' transcripts, such as antisense RNA species and promoter-upstream transcripts (PROMPTs), and of mRNAs with processing defects, thereby limiting or excluding their export to the cytoplasm. The RNA exosome may be involved in Ig class switch recombination (CSR) and/or Ig variable region somatic hypermutation (SHM) by targeting AICDA deamination activity to transcribed dsDNA substrates. In the cytoplasm, the RNA exosome complex is involved in general mRNA turnover and specifically degrades inherently unstable mRNAs containing AU-rich elements (AREs) within their 3' untranslated regions, and in RNA surveillance pathways, preventing translation of aberrant mRNAs. It seems to be involved in degradation of histone mRNA. The catalytic inactive RNA exosome core complex of 9 subunits (Exo-9) is proposed to play a pivotal role in the binding and presentation of RNA for ribonucleolysis, and to serve as a scaffold for the association with catalytic subunits and accessory proteins or complexes. EXOSC9 binds to ARE-containing RNAs. The chain is Exosome complex component RRP45 (Exosc9) from Mus musculus (Mouse).